The primary structure comprises 285 residues: Bifunctional protein FolD 2 (285 aa).

NADP(+) is bound by residues 164–166 (GRS), Ser189, and Val230.

The protein belongs to the tetrahydrofolate dehydrogenase/cyclohydrolase family. As to quaternary structure, homodimer.

It catalyses the reaction (6R)-5,10-methylene-5,6,7,8-tetrahydrofolate + NADP(+) = (6R)-5,10-methenyltetrahydrofolate + NADPH. The catalysed reaction is (6R)-5,10-methenyltetrahydrofolate + H2O = (6R)-10-formyltetrahydrofolate + H(+). The protein operates within one-carbon metabolism; tetrahydrofolate interconversion. In terms of biological role, catalyzes the oxidation of 5,10-methylenetetrahydrofolate to 5,10-methenyltetrahydrofolate and then the hydrolysis of 5,10-methenyltetrahydrofolate to 10-formyltetrahydrofolate. This Geobacter metallireducens (strain ATCC 53774 / DSM 7210 / GS-15) protein is Bifunctional protein FolD 2.